The chain runs to 289 residues: MSELLQLPPGFRFHPTDEELVMHYLCRKCASQSIAVPIIAEIDLYKYDPWELPGLALYGEKEWYFFSPRDRKYPNGSRPNRSAGSGYWKATGADKPIGLPKPVGIKKALVFYAGKAPKGEKTNWIMHEYRLADVDRSVRKKKNSLRLDDWVLCRIYNKKGATERRGPPPPVVYGDEIMEEKPKVTEMVMPPPPQQTSEFAYFDTSDSVPKLHTTDSSCSEQVVSPEFTSEVQSEPKWKDWSAVSNDNNNTLDFGFNYIDATVDNAFGGGGSSNQMFPLQDMFMYMQKPY.

In terms of domain architecture, NAC spans 7–158 (LPPGFRFHPT…DWVLCRIYNK (152 aa)).

Interacts with KIN10 and KIN11.

The protein localises to the nucleus. The chain is NAC domain-containing protein 2 (NAC002) from Arabidopsis thaliana (Mouse-ear cress).